The following is a 96-amino-acid chain: C-C motif chemokine 20 (96 aa).

Residues 1–26 (MMCSSKNLLLAALMSVLLLHFCSKSE) form the signal peptide. 2 disulfide bridges follow: Cys32–Cys58 and Cys33–Cys74.

Belongs to the intercrine beta (chemokine CC) family.

The protein resides in the secreted. Acts as a ligand for C-C chemokine receptor CCR6. Signals through binding and activation of CCR6 and induces a strong chemotactic response and mobilization of intracellular calcium ions. The ligand-receptor pair CCL20-CCR6 is responsible for the chemotaxis of dendritic cells (DC), effector/memory T-cells and B-cells and plays an important role at skin and mucosal surfaces under homeostatic and inflammatory conditions, as well as in pathology, including cancer and autoimmune diseases. CCL20 acts as a chemotactic factor that attracts lymphocytes and, slightly, neutrophils, but not monocytes. Involved in the recruitment of both the pro-inflammatory IL17 producing helper T-cells (Th17) and the regulatory T-cells (Treg) to sites of inflammation. Required for optimal migration of thymic natural regulatory T cells (nTregs) and DN1 early thymocyte progenitor cells. Positively regulates sperm motility and chemotaxis via its binding to CCR6 which triggers Ca2+ mobilization in the sperm which is important for its motility. May be involved in formation and function of the mucosal lymphoid tissues by attracting lymphocytes and dendritic cells towards epithelial cells. In Bos taurus (Bovine), this protein is C-C motif chemokine 20 (CCL20).